Here is a 72-residue protein sequence, read N- to C-terminus: uncharacterized protein (72 aa).

The protein localises to the plastid. It localises to the chloroplast. This is an uncharacterized protein from Oenothera berteroana (Bertero's evening primrose).